A 380-amino-acid polypeptide reads, in one-letter code: Probable inactive reductase easA (380 aa).

FMN contacts are provided by residues 25–27, Ala60, Gln102, and His171; that span reads PMT. Substrate-binding residues include His171 and Asn174. FMN-binding positions include Lys223, Gly299, 324–325, and Arg325; that span reads GR. Tyr352 is a substrate binding site.

The protein belongs to the NADH:flavin oxidoreductase/NADH oxidase family.

Its function is as follows. Probable inactive dehydrogenase; part of the gene cluster that mediates the biosynthesis of fungal ergot alkaloid ergovaline, the predominant ergopeptine product in E.festucae var. lolii. DmaW catalyzes the first step of ergot alkaloid biosynthesis by condensing dimethylallyl diphosphate (DMAP) and tryptophan to form 4-dimethylallyl-L-tryptophan. The second step is catalyzed by the methyltransferase easF that methylates 4-dimethylallyl-L-tryptophan in the presence of S-adenosyl-L-methionine, resulting in the formation of 4-dimethylallyl-L-abrine. The catalase easC and the FAD-dependent oxidoreductase easE then transform 4-dimethylallyl-L-abrine to chanoclavine-I which is further oxidized by easD in the presence of NAD(+), resulting in the formation of chanoclavine-I aldehyde. Agroclavine dehydrogenase easG then mediates the conversion of chanoclavine-I aldehyde to agroclavine via a non-enzymatic adduct reaction: the substrate is an iminium intermediate that is formed spontaneously from chanoclavine-I aldehyde in the presence of glutathione. The presence of easA is not required to complete this reaction. Further conversion of agroclavine to paspalic acid is a two-step process involving oxidation of agroclavine to elymoclavine and of elymoclavine to paspalic acid, the second step being performed by the elymoclavine oxidase cloA. Paspalic acid is then further converted to D-lysergic acid. Ergovaline is assembled from D-lysergic acid and three different amino acids by the D-lysergyl-peptide-synthetase composed of a monomudular (lpsB) and a trimodular (lpsA) nonribosomal peptide synthetase subunit. This is Probable inactive reductase easA from Epichloe festucae var. lolii (Neotyphodium lolii).